The sequence spans 387 residues: Phosphoglycerate kinase (387 aa).

Substrate-binding positions include 21 to 23, Arg-36, 59 to 62, Arg-113, and Arg-146; these read DLN and HLGR. Residues Lys-197, Glu-314, and 340–343 each bind ATP; that span reads GGDT.

Belongs to the phosphoglycerate kinase family. In terms of assembly, monomer.

It localises to the cytoplasm. The enzyme catalyses (2R)-3-phosphoglycerate + ATP = (2R)-3-phospho-glyceroyl phosphate + ADP. It functions in the pathway carbohydrate degradation; glycolysis; pyruvate from D-glyceraldehyde 3-phosphate: step 2/5. The polypeptide is Phosphoglycerate kinase (Proteus mirabilis (strain HI4320)).